Consider the following 228-residue polypeptide: MVKSSLQRILNSHCFAREKEGDKPSATIHASRTMPLLSLHSRGGSSSESSRVSLHCCSNPGPGPRWCSDAPHPPLKIPGGRGNSQRDHNLSANLFYSDDRLNVTEELTSNDKTRILNVQSRLTDAKRINWRTVLSGGSLYIEIPGGALPEGSKDSFAVLLEFAEEQLRADHVFICFHKNREDRAALLRTFSFLGFEIVRPGHPLVPKRPDACFMAYTFERESSGEEEE.

Residues 17–55 (REKEGDKPSATIHASRTMPLLSLHSRGGSSSESSRVSLH) are disordered. Low complexity predominate over residues 36–55 (LLSLHSRGGSSSESSRVSLH).

It belongs to the ODC antizyme family. In terms of assembly, interacts with ODC1 and thereby sterically blocks ODC homodimerization. Forms a ternary complex with PSMB4 and OAZ1 before PSMB4 is incorporated into the 20S proteasome. Interacts with AZIN2; this interaction disrupts the interaction between the antizyme and ODC1. Interacts with FAM171A1.

Functionally, ornithine decarboxylase (ODC) antizyme protein that negatively regulates ODC activity and intracellular polyamine biosynthesis and uptake in response to increased intracellular polyamine levels. Binds to ODC monomers, inhibiting the assembly of the functional ODC homodimer, and targets the monomers for ubiquitin-independent proteolytic destruction by the 26S proteasome. Triggers ODC degradation by inducing the exposure of a cryptic proteasome-interacting surface of ODC. Stabilizes AZIN2 by interfering with its ubiquitination. Also inhibits cellular uptake of polyamines by inactivating the polyamine uptake transporter. SMAD1/OAZ1/PSMB4 complex mediates the degradation of the CREBBP/EP300 repressor SNIP1. Involved in the translocation of AZIN2 from ER-Golgi intermediate compartment (ERGIC) to the cytosol. The sequence is that of Ornithine decarboxylase antizyme 1 (OAZ1) from Homo sapiens (Human).